Consider the following 104-residue polypeptide: Putative pterin-4-alpha-carbinolamine dehydratase (104 aa).

The protein belongs to the pterin-4-alpha-carbinolamine dehydratase family.

It catalyses the reaction (4aS,6R)-4a-hydroxy-L-erythro-5,6,7,8-tetrahydrobiopterin = (6R)-L-erythro-6,7-dihydrobiopterin + H2O. This is Putative pterin-4-alpha-carbinolamine dehydratase (pcbD) from Rhizobium meliloti (strain 1021) (Ensifer meliloti).